Here is a 159-residue protein sequence, read N- to C-terminus: Na(+)/H(+) antiporter subunit E1 (159 aa).

Helical transmembrane passes span 1–21, 27–47, 49–69, and 101–121; these read MAIQIILNFILAFIWIFLSGS, LLLGFILGLGFVYLFSRILPG, FYFIKIYKILKLAVVFFVELL, and WQIVLLSNLITLTPGTVVLGI.

It belongs to the CPA3 antiporters (TC 2.A.63) subunit E family. As to quaternary structure, may form a heterooligomeric complex that consists of seven subunits: mnhA1, mnhB1, mnhC1, mnhD1, mnhE1, mnhF1 and mnhG1.

It localises to the cell membrane. Functionally, mnh complex is a Na(+)/H(+) antiporter involved in Na(+) excretion. This chain is Na(+)/H(+) antiporter subunit E1 (mnhE1), found in Staphylococcus haemolyticus (strain JCSC1435).